The chain runs to 200 residues: 3-isopropylmalate dehydratase small subunit 2 (200 aa).

This sequence belongs to the LeuD family. LeuD type 1 subfamily. As to quaternary structure, heterodimer of LeuC and LeuD.

It catalyses the reaction (2R,3S)-3-isopropylmalate = (2S)-2-isopropylmalate. Its pathway is amino-acid biosynthesis; L-leucine biosynthesis; L-leucine from 3-methyl-2-oxobutanoate: step 2/4. In terms of biological role, catalyzes the isomerization between 2-isopropylmalate and 3-isopropylmalate, via the formation of 2-isopropylmaleate. The sequence is that of 3-isopropylmalate dehydratase small subunit 2 from Mannheimia succiniciproducens (strain KCTC 0769BP / MBEL55E).